The following is a 188-amino-acid chain: Sulfopyruvate decarboxylase subunit beta (188 aa).

The protein belongs to the TPP enzyme family. As to quaternary structure, heterododecamer composed of 6 subunits alpha and 6 subunits beta. Requires thiamine diphosphate as cofactor.

The enzyme catalyses 3-sulfopyruvate + H(+) = sulfoacetaldehyde + CO2. It participates in cofactor biosynthesis; coenzyme M biosynthesis; sulfoacetaldehyde from phosphoenolpyruvate and sulfite: step 4/4. Inhibited by oxygen when heated in air at 80 degrees Celsius. The enzyme is reactivated by addition of dithionite. In terms of biological role, involved in the biosynthesis of the coenzyme M (2-mercaptoethanesulfonic acid). Catalyzes the decarboxylation of sulfopyruvate to sulfoacetaldehyde. This Methanocaldococcus jannaschii (strain ATCC 43067 / DSM 2661 / JAL-1 / JCM 10045 / NBRC 100440) (Methanococcus jannaschii) protein is Sulfopyruvate decarboxylase subunit beta.